The following is a 436-amino-acid chain: Cyclin-A2-2 (436 aa).

It belongs to the cyclin family. Cyclin AB subfamily. In terms of tissue distribution, expressed in roots, stems, leaves, flowers and siliques.

This Arabidopsis thaliana (Mouse-ear cress) protein is Cyclin-A2-2 (CYCA2-2).